The sequence spans 274 residues: Long chain fatty acid elongase 6 (274 aa).

Over 1-30 (MPQGEVSFFEVLTTAPFSHELSKKHIAQTQ) the chain is Extracellular. The chain crosses the membrane as a helical span at residues 31 to 51 (YAAFWISMAYVVVIFGLKAVM). Residues 52–69 (TNRKPFDLTGPLNLWNAG) are Cytoplasmic-facing. The chain crosses the membrane as a helical span at residues 70-90 (LAIFSTLGSLATTFGLLHEFF). Topologically, residues 91 to 111 (SRGFFESYIHIGDFYNGLSGM) are extracellular. A helical transmembrane segment spans residues 112-132 (FTWLFVLSKVAEFGDTLFIIL). At 133-135 (RKK) the chain is on the cytoplasmic side. A helical transmembrane segment spans residues 136–156 (PLMFLHWYHHVLTMNYAFMSF). Over 157–159 (EAN) the chain is Extracellular. Residues 160–180 (LGFNTWITWMNFSVHSIMYGY) form a helical membrane-spanning segment. The Cytoplasmic segment spans residues 181 to 202 (YMLRSFGVKVPAWIAKNITTMQ). A helical transmembrane segment spans residues 203–223 (ILQFVITHFILFHVGYLAVTG). At 224–230 (QSVDSTP) the chain is on the extracellular side. A helical membrane pass occupies residues 231–251 (GYYWFCLLMEISYVVLFGNFY). The Cytoplasmic segment spans residues 252-274 (YQSYIKGGGKKFNAEKKTEKKIE).

This sequence belongs to the ELO family. In terms of tissue distribution, expressed in the gut, neurons, pharynx and muscles of the vulva.

The protein localises to the membrane. It carries out the reaction isopentadecanoyl-CoA + malonyl-CoA + H(+) = 3-oxoisoheptadecanoyl-CoA + CO2 + CoA. It functions in the pathway lipid metabolism; fatty acid biosynthesis. Catalyzes the first and rate-limiting reaction of the four reactions that constitute the long-chain fatty acids elongation cycle. Uses malonyl-CoA to add 2 carbons per cycle to the chain of long-chain fatty acids. Condensing enzyme required for the formation of isoheptadecanoate (C17iso), which plays critical roles in animal development and growth. The chain is Long chain fatty acid elongase 6 (elo-6) from Caenorhabditis elegans.